The chain runs to 546 residues: Chaperonin GroEL (546 aa).

Residues 30 to 33 (TLGP), K51, 87 to 91 (DGTTT), G415, 479 to 481 (NAA), and D495 contribute to the ATP site.

It belongs to the chaperonin (HSP60) family. As to quaternary structure, forms a cylinder of 14 subunits composed of two heptameric rings stacked back-to-back. Interacts with the co-chaperonin GroES.

It is found in the cytoplasm. It carries out the reaction ATP + H2O + a folded polypeptide = ADP + phosphate + an unfolded polypeptide.. Functionally, together with its co-chaperonin GroES, plays an essential role in assisting protein folding. The GroEL-GroES system forms a nano-cage that allows encapsulation of the non-native substrate proteins and provides a physical environment optimized to promote and accelerate protein folding. The chain is Chaperonin GroEL from Xanthomonas axonopodis pv. citri (strain 306).